The following is a 368-amino-acid chain: Ubl carboxyl-terminal hydrolase 18 (368 aa).

Residues 31–48 (MKRKRVLSRDLCSAWDSP) form a mediates interaction with IFNAR2 region. Residues 48–109 (PHGLVGLHNI…LLLLLEKMQD (62 aa)) form a mediates interaction with STAT2 region. In terms of domain architecture, USP spans 52-366 (VGLHNIGQTC…TAYLLVYTKT (315 aa)). The active-site Nucleophile is Cys61. A mediates interaction with STAT2 and necessary for the negative regulation of the type I IFN signaling pathway region spans residues 299–308 (ELFAVIAHVG). The interval 309–368 (MADFGHYCAYIRNPVDGKWFCFNDSHVCWVTWKDVQCTYGNHRYRWRETAYLLVYTKTGS) is mediates interaction with IFNAR2. Residue His314 is the Proton acceptor of the active site.

Belongs to the peptidase C19 family. In terms of assembly, interacts with STAT2; the interaction is direct. Interacts with IFNAR2; indirectly via STAT2, it negatively regulates the assembly of the ternary interferon-IFNAR1-IFNAR2 complex and inhibits type I interferon signaling. Interacts with STING1. Interacts with USP20.

The enzyme catalyses Thiol-dependent hydrolysis of ester, thioester, amide, peptide and isopeptide bonds formed by the C-terminal Gly of ubiquitin (a 76-residue protein attached to proteins as an intracellular targeting signal).. Functionally, interferon-induced ISG15-specific protease that plays a crucial role for maintaining a proper balance of ISG15-conjugated proteins in cells. Regulates protein ISGylation by efficiently cleaving ISG15 conjugates linked via isopeptide bonds. Regulates T-cell activation and T-helper 17 (Th17) cell differentiation by deubiquitinating TAK1, likely to keep TAK1-TAB complexes in steady conditions. In turn, restricts activation of NF-kappa-B, NFAT, and JNK as well as expression of IL2 in T-cells after TCR activation. Acts as a molecular adapter with USP20 to promote innate antiviral response through deubiquitinating STING1. Involved also in the negative regulation of the inflammatory response triggered by type I interferon. Upon recruitment by STAT2 to the type I interferon receptor subunit IFNAR2 interferes with the assembly of the ternary interferon-IFNAR1-IFNAR2 complex and acts as a negative regulator of the type I interferon signaling pathway. This Mus musculus (Mouse) protein is Ubl carboxyl-terminal hydrolase 18 (Usp18).